A 533-amino-acid chain; its full sequence is MVADLRREARDVEEEVERIRRRAEQDAAEQTERVRREAEQIRRHAEEAAEAIRERAVADAELRASRAEAAARDAIHAEREQIRAELDEDLRTQRTELRGWDSRLTQREQRVTDQAASVEERLRRLETREAELAVREAGLDSRESDLGELEEARRRELERVAGLTSAEARTELVKVVEDQARLDAAVRVRDIEARAEEEAEDRARRIVTLAIQRVASDQTAESVVSVLHLPSDEMKGRIIGREGRNIRAFESVTGVNVLIDDTPEAVLLSCFDPVRREMGRITLTALVSDGRIHPHRIEEEYARAEREVAAKCVRAGEDALIDVGIAEMHPELINLLGRLRYRTSYGQNVLAHLVESAHLAGIMAAELRLPPAIAKRGTLLHDLGKALTHEVEGSHAIVGAEIARRYGEHEDVVHAIEAHHNEVEPRSIGAVLTQAADQISGGRPGARRDSLESYVKRLERIEQIAAERPGVEKVFAMQAGREVRVMVVPELVDDVAAHLLARDVAKQIEDELTYPGQIRVTVVRETRAVGMAR.

The tract at residues Val16–Ile41 is disordered. Basic and acidic residues predominate over residues Arg22–Ile41. The 67-residue stretch at Val223 to Asp289 folds into the KH domain. Positions Val349–Gly442 constitute an HD domain.

It belongs to the RNase Y family.

Functionally, endoribonuclease that initiates mRNA decay. The chain is Ribonuclease Y from Parafrankia sp. (strain EAN1pec).